The primary structure comprises 3184 residues: Probable serine/threonine-protein kinase pats1 (3184 aa).

Positions 369-378 (DPPPPPPSNS) are enriched in pro residues. Disordered stretches follow at residues 369-516 (DPPP…QIPP) and 913-1013 (SITR…TSIL). A compositionally biased stretch (low complexity) spans 379 to 415 (SPPISKSTSNNNLNVSNYHNNNNNNNNSNSNLSNSGN). Positions 421–450 (DFQSQNLVKSYNRENSGNSLNSMLHQTSLP) are enriched in polar residues. Residues 451–512 (NNNNSNVVNN…NNNNSNNNNS (62 aa)) show a composition bias toward low complexity. Residues 842–1348 (CFPDHSLLQE…FQDTMWNEYF (507 aa)) enclose the Myotubularin phosphatase domain. The segment covering 913–934 (SITRATSPEDQNNGSSNYLLTP) has biased composition (polar residues). Positions 935–993 (NSPNSSSSNLANNNNSNNNNINNNNNNNNNNNNNNNNNSNNNNNNNNNNNNNNNNNNNN) are enriched in low complexity. Residues 1000 to 1013 (SRSTTIDNGQTSIL) show a composition bias toward polar residues. LRR repeat units lie at residues 1391-1412 (FLET…STLY), 1416-1438 (GLRE…SSLV), 1439-1460 (KLEK…TVVL), 1467-1488 (SLTE…FSMF), 1491-1512 (SLKK…LGML), 1514-1535 (NLIE…GVGI), 1541-1563 (KLCI…GDLK), 1564-1585 (SLEK…FRQL), 1587-1608 (NLEE…VCFL), 1610-1631 (NLKK…ISQL), 1633-1654 (KLMI…IGQL), 1656-1678 (QLVS…MGLL), and 1680-1701 (NLVE…IVSL). In terms of domain architecture, Roc spans 1716-1910 (GQEQCYKMKL…EKLEALVQSQ (195 aa)). Residues 1716–1910 (GQEQCYKMKL…EKLEALVQSQ (195 aa)) form a small GTPase-like region. GTP-binding positions include 1729–1736 (GQENVGKT), 1797–1801 (DFAGQ), and 1854–1857 (THLD). Residues 1918–2127 (PRSYMLLENL…KCYWKNGMIL (210 aa)) enclose the COR domain. A Protein kinase domain is found at 2247–2519 (LMIEELIGEG…RLIKIAEAMF (273 aa)). ATP contacts are provided by residues 2253 to 2261 (IGEGGAALV) and Lys-2274. Catalysis depends on Asp-2379, which acts as the Proton acceptor. Disordered regions lie at residues 2528 to 2609 (YQQQ…TISH) and 2652 to 2671 (NSIN…NSLL). Positions 2529-2555 (QQQQQQQQQQQQSSPSKSSSTSPIIKS) are enriched in low complexity. Residues 2556 to 2576 (LNLSTVSELGESSNQTPKQNI) show a composition bias toward polar residues. WD repeat units follow at residues 2745-2785 (PNQG…KYIQ), 2790-2829 (ANKD…KIKS), 2909-2947 (AHER…HTIE), 2949-2986 (AHSS…LVSE), and 2990-3040 (KHKD…NSRS). The span at 3055 to 3126 (GSSNSITNSN…NYYYSNNVNS (72 aa)) shows a compositional bias: low complexity. The disordered stretch occupies residues 3055 to 3164 (GSSNSITNSN…TPPGSKGLMQ (110 aa)). The segment covering 3141-3157 (HEQTSPNSATPLSSTPP) has biased composition (polar residues).

It belongs to the protein kinase superfamily. TKL Ser/Thr protein kinase family. ROCO subfamily.

It catalyses the reaction L-seryl-[protein] + ATP = O-phospho-L-seryl-[protein] + ADP + H(+). The enzyme catalyses L-threonyl-[protein] + ATP = O-phospho-L-threonyl-[protein] + ADP + H(+). In terms of biological role, may act as a serine/threonine-protein kinase and guanine-nucleotide releasing factor. Essential regulator of cytokinesis involved in the binding to actomyosin cytoskeleton. This Dictyostelium discoideum (Social amoeba) protein is Probable serine/threonine-protein kinase pats1 (pats1).